Consider the following 103-residue polypeptide: G0/G1 switch protein 2 (103 aa).

The disordered stretch occupies residues 80–103 (LQEKGKQQDTVLGGRALSNRQHAS).

In terms of assembly, directly interacts with BCL2; this interaction prevents the formation of the anti-apoptotic BAX-BCL2 complex. In terms of tissue distribution, widely expressed with highest levels in peripheral blood, skeletal muscle and heart, followed by kidney and liver.

It is found in the mitochondrion. Functionally, promotes apoptosis by binding to BCL2, hence preventing the formation of protective BCL2-BAX heterodimers. This is G0/G1 switch protein 2 (G0S2) from Homo sapiens (Human).